The primary structure comprises 246 residues: Eukaryotic translation initiation factor 6 (246 aa).

Ser174 and Ser175 each carry phosphoserine; by CK1.

The protein belongs to the eIF-6 family. As to quaternary structure, monomer. Associates with the 60S ribosomal subunit. Phosphorylation at Ser-174 and Ser-175 promotes nuclear export.

It localises to the cytoplasm. The protein localises to the nucleus. Its subcellular location is the nucleolus. Binds to the 60S ribosomal subunit and prevents its association with the 40S ribosomal subunit to form the 80S initiation complex in the cytoplasm. Is also involved in ribosome biogenesis. Associates with pre-60S subunits in the nucleus and is involved in its nuclear export. This chain is Eukaryotic translation initiation factor 6 (tif-6), found in Neurospora crassa (strain ATCC 24698 / 74-OR23-1A / CBS 708.71 / DSM 1257 / FGSC 987).